Consider the following 177-residue polypeptide: Peroxiredoxin-2 (177 aa).

Ala2 bears the N-acetylalanine mark. In terms of domain architecture, Thioredoxin spans 6–164 (ARIGKPAPDF…ALRLVQAFQY (159 aa)). Cys51 serves as the catalytic Cysteine sulfenic acid (-SOH) intermediate. Ser112 is modified (phosphoserine).

The protein belongs to the peroxiredoxin family. AhpC/Prx1 subfamily. In terms of assembly, homodimer; disulfide-linked, upon oxidation. 5 homodimers assemble to form a ring-like decamer. Interacts with TIPIN. In terms of processing, the enzyme can be inactivated by further oxidation of the cysteine sulfenic acid (C(P)-SOH) to sulphinic acid (C(P)-SO2H) instead of its condensation to a disulfide bond. It can be reactivated by forming a transient disulfide bond with sulfiredoxin SRXN1, which reduces the cysteine sulfinic acid in an ATP- and Mg-dependent manner. Acetylation increases resistance to transition to high molecular-mass complexes. Deacetylated by HDAC6 which decreases reducing activity.

It localises to the cytoplasm. The catalysed reaction is a hydroperoxide + [thioredoxin]-dithiol = an alcohol + [thioredoxin]-disulfide + H2O. Functionally, thiol-specific peroxidase that catalyzes the reduction of hydrogen peroxide and organic hydroperoxides to water and alcohols, respectively. Plays a role in cell protection against oxidative stress by detoxifying peroxides and as sensor of hydrogen peroxide-mediated signaling events. Might participate in the signaling cascades of growth factors and tumor necrosis factor-alpha by regulating the intracellular concentrations of H(2)O(2). The protein is Peroxiredoxin-2 (PRDX2) of Pongo abelii (Sumatran orangutan).